A 296-amino-acid chain; its full sequence is Light-independent protochlorophyllide reductase iron-sulfur ATP-binding protein (296 aa).

Residues 39–44 (GIGKST) and K68 contribute to the ATP site. S43 lines the Mg(2+) pocket. [4Fe-4S] cluster is bound by residues C124 and C158. Position 209–210 (209–210 (NR)) interacts with ATP.

Belongs to the NifH/BchL/ChlL family. Homodimer. Protochlorophyllide reductase is composed of three subunits; ChlL, ChlN and ChlB. [4Fe-4S] cluster serves as cofactor.

It catalyses the reaction chlorophyllide a + oxidized 2[4Fe-4S]-[ferredoxin] + 2 ADP + 2 phosphate = protochlorophyllide a + reduced 2[4Fe-4S]-[ferredoxin] + 2 ATP + 2 H2O. It functions in the pathway porphyrin-containing compound metabolism; chlorophyll biosynthesis (light-independent). Its function is as follows. Component of the dark-operative protochlorophyllide reductase (DPOR) that uses Mg-ATP and reduced ferredoxin to reduce ring D of protochlorophyllide (Pchlide) to form chlorophyllide a (Chlide). This reaction is light-independent. The L component serves as a unique electron donor to the NB-component of the complex, and binds Mg-ATP. This is Light-independent protochlorophyllide reductase iron-sulfur ATP-binding protein from Prochlorococcus marinus (strain MIT 9313).